Reading from the N-terminus, the 148-residue chain is Tetratricopeptide repeat protein 32 (148 aa).

TPR repeat units follow at residues 12–45 (SSAALATAQARFSRGEFAEARELYSAFIGQCARH), 55–88 (ATAYNNRGQTKYFSVDFYEAMDDYTSAIEILPSF), and 89–122 (EVPYYNRGLIRYRLGYFDEALEDFKKALDLNPGF).

This chain is Tetratricopeptide repeat protein 32 (Ttc32), found in Mus musculus (Mouse).